The sequence spans 353 residues: Guanine nucleotide-binding protein G(q) subunit alpha (353 aa).

Residues Cys-3 and Cys-4 are each lipidated (S-palmitoyl cysteine). In terms of domain architecture, G-alpha spans Arg-32 to Val-353. Residues Lys-35 to Thr-48 are G1 motif. GTP-binding positions include Gly-40–Ser-47, Leu-174–Thr-180, Asp-199–Gln-203, Asn-268–Asp-271, and Ala-325. Mg(2+)-binding residues include Ser-47 and Thr-180. The G2 motif stretch occupies residues Asp-172–Thr-180. Positions Phe-195–Arg-204 are G3 motif. Residues Ile-264–Asp-271 form a G4 motif region. The segment at Thr-323–Thr-328 is G5 motif.

It belongs to the G-alpha family. G(q) subfamily. In terms of assembly, g proteins are composed of 3 units; alpha, beta and gamma. The alpha chain contains the guanine nucleotide binding site.

In terms of biological role, guanine nucleotide-binding proteins (G proteins) are involved as modulators or transducers in various transmembrane signaling systems. The chain is Guanine nucleotide-binding protein G(q) subunit alpha from Homarus americanus (American lobster).